The sequence spans 86 residues: Small ribosomal subunit protein uS17 (86 aa).

This sequence belongs to the universal ribosomal protein uS17 family. As to quaternary structure, part of the 30S ribosomal subunit.

Its function is as follows. One of the primary rRNA binding proteins, it binds specifically to the 5'-end of 16S ribosomal RNA. The protein is Small ribosomal subunit protein uS17 of Halalkalibacterium halodurans (strain ATCC BAA-125 / DSM 18197 / FERM 7344 / JCM 9153 / C-125) (Bacillus halodurans).